We begin with the raw amino-acid sequence, 359 residues long: Membrane-bound lytic murein transglycosylase C (359 aa).

The signal sequence occupies residues 1–16 (MKKVLALALIAPLLIS). C17 is lipidated: N-palmitoyl cysteine. Residue C17 is the site of S-diacylglycerol cysteine attachment.

The protein belongs to the transglycosylase Slt family.

The protein resides in the cell outer membrane. It catalyses the reaction Exolytic cleavage of the (1-&gt;4)-beta-glycosidic linkage between N-acetylmuramic acid (MurNAc) and N-acetylglucosamine (GlcNAc) residues in peptidoglycan, from either the reducing or the non-reducing ends of the peptidoglycan chains, with concomitant formation of a 1,6-anhydrobond in the MurNAc residue.. Functionally, murein-degrading enzyme. May play a role in recycling of muropeptides during cell elongation and/or cell division. This chain is Membrane-bound lytic murein transglycosylase C, found in Edwardsiella ictaluri (strain 93-146).